Reading from the N-terminus, the 287-residue chain is Festuclavine synthase I (287 aa).

Belongs to the fgaFS/easG family.

It carries out the reaction festuclavine + NAD(+) = 6,8-dimethyl-6,7-didehydroergoline + NADH + H(+). The protein operates within alkaloid biosynthesis; ergot alkaloid biosynthesis. Functionally, festuclavine synthase; part of the gene cluster that mediates the biosynthesis of isofumigaclavines, fungal ergot alkaloids. The tryptophan dimethylallyltransferase ifgA catalyzes the first step of ergot alkaloid biosynthesis by condensing dimethylallyl diphosphate (DMAP) and tryptophan to form 4-dimethylallyl-L-tryptophan. The second step is catalyzed by the methyltransferase ifgB that methylates 4-dimethylallyl-L-tryptophan in the presence of S-adenosyl-L-methionine, resulting in the formation of N-methyl-dimethylallyl-L-tryptophan. The catalase ifgD and the FAD-dependent oxidoreductase ifgC then transform N-methyl-dimethylallyl-L-tryptophan to chanoclavine-I which is further oxidized by ifgE in the presence of NAD(+), resulting in the formation of chanoclavine-I aldehyde. The chanoclavine-I aldehyde reductases ifgG and/or fgaOx3 reduce chanoclavine-I aldehyde to dihydrochanoclavine-I aldehyde that spontaneously dehydrates to form 6,8-dimethyl-6,7-didehydroergoline. The festuclavine dehydrogenases ifgF1 and/or ifgF2 then catalyze the reduction of 6,8-dimethyl-6,7-didehydroergoline to form festuclavine. Hydrolysis of festuclavine by a yet undetermined cytochrome P450 monooxygenase (called ifgH) then leads to the formation of isofumigaclavine B which is in turn acetylated by ifgI to isofumigaclavine A. Penicillium roqueforti has interestingly at least two sets of genes for the consumption of chanoclavine-I aldehyde on three different loci, the OYEs ifgG/fgaOx3 and the festuclavine synthase homologs ifgF1/ifgF2. The reason for the duplication of these genes is unclear, probably to ensure the conversion of chanoclavine-I aldehyde by differential gene expression under various environmental conditions. This chain is Festuclavine synthase I, found in Penicillium roqueforti (strain FM164).